The chain runs to 205 residues: Ribosomal RNA large subunit methyltransferase E (205 aa).

5 residues coordinate S-adenosyl-L-methionine: Gly-60, Trp-62, Asp-80, Asp-96, and Asp-121. Lys-161 functions as the Proton acceptor in the catalytic mechanism.

The protein belongs to the class I-like SAM-binding methyltransferase superfamily. RNA methyltransferase RlmE family.

It localises to the cytoplasm. It carries out the reaction uridine(2552) in 23S rRNA + S-adenosyl-L-methionine = 2'-O-methyluridine(2552) in 23S rRNA + S-adenosyl-L-homocysteine + H(+). Functionally, specifically methylates the uridine in position 2552 of 23S rRNA at the 2'-O position of the ribose in the fully assembled 50S ribosomal subunit. The sequence is that of Ribosomal RNA large subunit methyltransferase E from Dechloromonas aromatica (strain RCB).